We begin with the raw amino-acid sequence, 572 residues long: Urease subunit alpha (572 aa).

Residues 136-572 form the Urease domain; sequence GGIDTHIHFI…VPLGQRYFLF (437 aa). Residues His141, His143, and Lys224 each contribute to the Ni(2+) site. N6-carboxylysine is present on Lys224. His226 provides a ligand contact to substrate. Residues His253 and His279 each contribute to the Ni(2+) site. Catalysis depends on His327, which acts as the Proton donor. Asp367 is a binding site for Ni(2+).

It belongs to the metallo-dependent hydrolases superfamily. Urease alpha subunit family. Heterotrimer of UreA (gamma), UreB (beta) and UreC (alpha) subunits. Three heterotrimers associate to form the active enzyme. Ni cation is required as a cofactor. Post-translationally, carboxylation allows a single lysine to coordinate two nickel ions.

It localises to the cytoplasm. The enzyme catalyses urea + 2 H2O + H(+) = hydrogencarbonate + 2 NH4(+). Its pathway is nitrogen metabolism; urea degradation; CO(2) and NH(3) from urea (urease route): step 1/1. This is Urease subunit alpha from Haemophilus influenzae (strain 86-028NP).